Reading from the N-terminus, the 166-residue chain is MAAKGELVGSKVLVRNDRDANRLYSSMYGKPSRRGLQLWPEEALFLCEIGRLEVRSGNVRISPEELMDRFVEEDPRFPVRYAVYADLRRRGWKPKPGRKFGTEFRAFRGEDERIAVKVLQEELDEFTAQDILEWLKLVEGTEFELVVAIVDNDYDLNYYVFSELVL.

The protein belongs to the tRNA-intron endonuclease family. Archaeal short subfamily.

In Methanopyrus kandleri (strain AV19 / DSM 6324 / JCM 9639 / NBRC 100938), this protein is EndA-like protein.